The primary structure comprises 259 residues: Proteasome subunit alpha (259 aa).

It belongs to the peptidase T1A family. As to quaternary structure, the 20S proteasome core is composed of 14 alpha and 14 beta subunits that assemble into four stacked heptameric rings, resulting in a barrel-shaped structure. The two inner rings, each composed of seven catalytic beta subunits, are sandwiched by two outer rings, each composed of seven alpha subunits. The catalytic chamber with the active sites is on the inside of the barrel. Has a gated structure, the ends of the cylinder being occluded by the N-termini of the alpha-subunits. Is capped at one or both ends by the proteasome regulatory ATPase, PAN.

The protein resides in the cytoplasm. With respect to regulation, the formation of the proteasomal ATPase PAN-20S proteasome complex, via the docking of the C-termini of PAN into the intersubunit pockets in the alpha-rings, triggers opening of the gate for substrate entry. Interconversion between the open-gate and close-gate conformations leads to a dynamic regulation of the 20S proteasome proteolysis activity. In terms of biological role, component of the proteasome core, a large protease complex with broad specificity involved in protein degradation. The protein is Proteasome subunit alpha of Methanococcus maripaludis (strain C7 / ATCC BAA-1331).